The chain runs to 215 residues: Protein LURP-one-related 4 (215 aa).

The protein belongs to the LOR family.

In terms of biological role, might be related to the phospholipid scramblase and tubby-like superfamily of membrane tethered transcription factors. The chain is Protein LURP-one-related 4 from Arabidopsis thaliana (Mouse-ear cress).